Reading from the N-terminus, the 139-residue chain is Centromere protein S (139 aa).

The segment at 99–139 (ELASSNMEQKEKKKKKSSAAKGRKTEENETPVTESEDSNMA) is disordered. The segment covering 110-120 (KKKKKSSAAKG) has biased composition (basic residues).

The protein belongs to the TAF9 family. CENP-S/MHF1 subfamily. In terms of assembly, heterodimer with CENPX, sometimes called MHF; this interaction stabilizes both partners. MHF heterodimers can assemble to form tetrameric structures. MHF also coassemble with CENPT-CENPW heterodimers at centromeres to form the tetrameric CENP-T-W-S-X complex. Forms a discrete complex with FANCM and CENPX, called FANCM-MHF; this interaction, probably mediated by direct binding between CENPS and FANCM, leads to synergistic activation of double-stranded DNA binding and strongly stimulates FANCM-mediated DNA remodeling. Recruited by FANCM to the Fanconi anemia (FA) core complex, which consists of CENPS, CENPX, FANCA, FANCB, FANCC, FANCE, FANCF, FANCG, FANCL, FANCM, FAAP24 and FAAP100. The FA core complex associates with Bloom syndrome (BLM) complex, which consists of at least BLM, DNA topoisomerase 3-alpha (TOP3A), RMI1/BLAP75, RPA1/RPA70 and RPA2/RPA32. The super complex between FA and BLM is called BRAFT. Component of the CENPA-CAD complex, composed of CENPI, CENPK, CENPL, CENPO, CENPP, CENPQ, CENPR and CENPS. The CENPA-CAD complex is probably recruited on centromeres by the CENPA-NAC complex, at least composed of CENPA, CENPC, CENPH, CENPM, CENPN, CENPT and CENPU.

It is found in the nucleus. Its subcellular location is the chromosome. It localises to the centromere. The protein localises to the kinetochore. Functionally, DNA-binding component of the Fanconi anemia (FA) core complex. Required for the normal activation of the FA pathway, leading to monoubiquitination of the FANCI-FANCD2 complex in response to DNA damage, cellular resistance to DNA cross-linking drugs, and prevention of chromosomal breakage. In complex with CENPX (MHF heterodimer), crucial cofactor for FANCM in both binding and ATP-dependent remodeling of DNA. Stabilizes FANCM. In complex with CENPX and FANCM (but not other FANC proteins), rapidly recruited to blocked forks and promotes gene conversion at blocked replication forks. In complex with CENPT, CENPW and CENPX (CENP-T-W-S-X heterotetramer), involved in the formation of a functional kinetochore outer plate, which is essential for kinetochore-microtubule attachment and faithful mitotic progression. As a component of MHF and CENP-T-W-S-X complexes, binds DNA and bends it to form a nucleosome-like structure. DNA-binding function is fulfilled in the presence of CENPX, with the following preference for DNA substates: Holliday junction &gt; double-stranded &gt; splay arm &gt; single-stranded. Does not bind DNA on its own. The chain is Centromere protein S (CENPS) from Gallus gallus (Chicken).